Consider the following 505-residue polypeptide: ATP synthase subunit alpha, chloroplastic (505 aa).

170 to 177 (GDRQTGKT) lines the ATP pocket.

Belongs to the ATPase alpha/beta chains family. F-type ATPases have 2 components, CF(1) - the catalytic core - and CF(0) - the membrane proton channel. CF(1) has five subunits: alpha(3), beta(3), gamma(1), delta(1), epsilon(1). CF(0) has four main subunits: a, b, b' and c.

Its subcellular location is the plastid. It localises to the chloroplast thylakoid membrane. The catalysed reaction is ATP + H2O + 4 H(+)(in) = ADP + phosphate + 5 H(+)(out). Produces ATP from ADP in the presence of a proton gradient across the membrane. The alpha chain is a regulatory subunit. This is ATP synthase subunit alpha, chloroplastic from Oenothera elata subsp. hookeri (Hooker's evening primrose).